Reading from the N-terminus, the 336-residue chain is Holliday junction branch migration complex subunit RuvB (336 aa).

The tract at residues 4–185 is large ATPase domain (RuvB-L); that stretch reads ADRLISADIQ…FGIVQRLEFY (182 aa). Residues isoleucine 24, arginine 25, glycine 66, lysine 69, threonine 70, threonine 71, 132-134, arginine 175, tyrosine 185, and arginine 222 contribute to the ATP site; that span reads EDY. Threonine 70 contacts Mg(2+). The small ATPAse domain (RuvB-S) stretch occupies residues 186-256; that stretch reads NVDDLQHIVA…IASKALDMLN (71 aa). The tract at residues 259–336 is head domain (RuvB-H); sequence AAGFDYLDRK…RHFNRIMEAP (78 aa). Positions 295, 314, and 319 each coordinate DNA.

The protein belongs to the RuvB family. In terms of assembly, homohexamer. Forms an RuvA(8)-RuvB(12)-Holliday junction (HJ) complex. HJ DNA is sandwiched between 2 RuvA tetramers; dsDNA enters through RuvA and exits via RuvB. An RuvB hexamer assembles on each DNA strand where it exits the tetramer. Each RuvB hexamer is contacted by two RuvA subunits (via domain III) on 2 adjacent RuvB subunits; this complex drives branch migration. In the full resolvosome a probable DNA-RuvA(4)-RuvB(12)-RuvC(2) complex forms which resolves the HJ.

Its subcellular location is the cytoplasm. The enzyme catalyses ATP + H2O = ADP + phosphate + H(+). In terms of biological role, the RuvA-RuvB-RuvC complex processes Holliday junction (HJ) DNA during genetic recombination and DNA repair, while the RuvA-RuvB complex plays an important role in the rescue of blocked DNA replication forks via replication fork reversal (RFR). RuvA specifically binds to HJ cruciform DNA, conferring on it an open structure. The RuvB hexamer acts as an ATP-dependent pump, pulling dsDNA into and through the RuvAB complex. RuvB forms 2 homohexamers on either side of HJ DNA bound by 1 or 2 RuvA tetramers; 4 subunits per hexamer contact DNA at a time. Coordinated motions by a converter formed by DNA-disengaged RuvB subunits stimulates ATP hydrolysis and nucleotide exchange. Immobilization of the converter enables RuvB to convert the ATP-contained energy into a lever motion, pulling 2 nucleotides of DNA out of the RuvA tetramer per ATP hydrolyzed, thus driving DNA branch migration. The RuvB motors rotate together with the DNA substrate, which together with the progressing nucleotide cycle form the mechanistic basis for DNA recombination by continuous HJ branch migration. Branch migration allows RuvC to scan DNA until it finds its consensus sequence, where it cleaves and resolves cruciform DNA. The sequence is that of Holliday junction branch migration complex subunit RuvB from Proteus mirabilis (strain HI4320).